The primary structure comprises 569 residues: Tetratricopeptide repeat protein 22 (569 aa).

7 TPR repeats span residues 66–99, 101–133, 203–237, 260–294, 295–328, 383–418, and 432–465; these read PAVR…HPGN, NAWA…MGLA, ATLY…LRQV, KDTF…AKNQ, PPIL…LRDP, FKAY…ALVF, and PELQ…DDAG.

The protein is Tetratricopeptide repeat protein 22 (TTC22) of Homo sapiens (Human).